The sequence spans 220 residues: Probable septum site-determining protein MinC (220 aa).

This sequence belongs to the MinC family. Interacts with MinD and FtsZ.

Cell division inhibitor that blocks the formation of polar Z ring septums. Rapidly oscillates between the poles of the cell to destabilize FtsZ filaments that have formed before they mature into polar Z rings. Prevents FtsZ polymerization. This is Probable septum site-determining protein MinC from Prochlorococcus marinus subsp. pastoris (strain CCMP1986 / NIES-2087 / MED4).